A 326-amino-acid polypeptide reads, in one-letter code: Malate dehydrogenase (326 aa).

11-17 serves as a coordination point for NAD(+); it reads GAAGQIG. R92 and R98 together coordinate substrate. Residues N105, Q112, and 129–131 contribute to the NAD(+) site; that span reads VGN. Substrate is bound by residues N131 and R162. H187 (proton acceptor) is an active-site residue.

It belongs to the LDH/MDH superfamily. MDH type 2 family.

The catalysed reaction is (S)-malate + NAD(+) = oxaloacetate + NADH + H(+). Its function is as follows. Catalyzes the reversible oxidation of malate to oxaloacetate. This Halorhodospira halophila (strain DSM 244 / SL1) (Ectothiorhodospira halophila (strain DSM 244 / SL1)) protein is Malate dehydrogenase.